We begin with the raw amino-acid sequence, 132 residues long: Small ribosomal subunit protein uS11 (132 aa).

Belongs to the universal ribosomal protein uS11 family. In terms of assembly, part of the 30S ribosomal subunit.

Its function is as follows. Located on the platform of the 30S subunit. This is Small ribosomal subunit protein uS11 (rps11) from Korarchaeum cryptofilum (strain OPF8).